Reading from the N-terminus, the 722-residue chain is Metal transporter cnnm-5 (722 aa).

The first 17 residues, 1–17 (MSLFLFAIFQLALGSPG), serve as a signal peptide directing secretion. Topologically, residues 18–139 (APNGPNVPLQ…AAAAKYMGDE (122 aa)) are extracellular. Residues Asn-102 and Asn-114 are each glycosylated (N-linked (GlcNAc...) asparagine). In terms of domain architecture, CNNM transmembrane spans 132 to 318 (AAKYMGDEIV…AQNEREKTIL (187 aa)). Residues 140–160 (IVFCFFCILMSAYASGMTLGY) traverse the membrane as a helical segment. Residues 161–196 (MKFSMIDLNTMLKIAEGDAAKKRVRRIMHFRRRSTQ) are Cytoplasmic-facing. Residues 197 to 217 (LVVTFSLFSSVFTVLFTTTCE) traverse the membrane as a helical segment. The Extracellular portion of the chain corresponds to 218–227 (KMLHGVSNED). Residues 228–248 (VLKMAVPALICLIFAEMIPQA) traverse the membrane as a helical segment. Topologically, residues 249–257 (VCNSKFGFN) are cytoplasmic. The chain crosses the membrane as a helical span at residues 258 to 278 (LAASLWFVTVIIFFVTLPIAY). Residues 279–722 (PASLVLGRFL…ETTPFMEKQE (444 aa)) lie on the Extracellular side of the membrane. N-linked (GlcNAc...) asparagine glycosylation is found at Asn-320, Asn-349, and Asn-371. 2 consecutive CBS domains span residues 333-396 (MVPI…LIDE) and 413-473 (TVKF…KIDE). Positions 584 to 607 (SQRSSSTVNSQQHRQQTTDNSRST) are disordered. N-linked (GlcNAc...) asparagine glycosylation occurs at Asn-639. A disordered region spans residues 686–722 (LNSRASTSTSTTPACRTPLSVDARSQDETTPFMEKQE). Positions 688–703 (SRASTSTSTTPACRTP) are enriched in low complexity.

It belongs to the ACDP family.

The protein resides in the cell membrane. Functionally, probable metal transporter. Probably acts redundantly with the other metal transport proteins cnnm-1, cnnm-2, cnnm-3 and cnnm-4 to regulate Mg(2+) homeostasis. The protein is Metal transporter cnnm-5 of Caenorhabditis elegans.